We begin with the raw amino-acid sequence, 336 residues long: MIATQRPFPIPSPVPLAPSSTVLPTTVPENAPEHCPGVESSQAGKADACEGCPNQSVCAEGPKGPDPDLPLIRERMSSVRRKILVLSGKGGVGKSTFTAGLSWALAADEECQAGIMDIDICGPSIPLLMGLESSTIHTSASGWSPAYALDNLAVMSIGFLLPSSSDAVIWRGPKKNGLIKQFLKDVEWGDLDYMVVDTPPGTSDEHLSIVQYLKEAGIDGAVLVTTPQEVALQDVRKEIDFCKKVGIPILGLVENMSGFVCPNCKNESQIFAPTTGGAEAMGKELGIELLGKVPLDPRIGMTCDQGMSFLDEYPESPATMAYLDIVQRIREILDDE.

Residues Met-1–Ser-20 form a disordered region. Residues Cys-35, Cys-49, Cys-52, and Cys-58 each coordinate [4Fe-4S] cluster. Gly-88–Ser-95 serves as a coordination point for ATP. Residues Cys-261 and Cys-264 each coordinate [4Fe-4S] cluster.

Belongs to the Mrp/NBP35 ATP-binding proteins family. NUBP1/NBP35 subfamily. In terms of assembly, heterotetramer of 2 NBP35 and 2 CFD1 chains. [4Fe-4S] cluster is required as a cofactor.

It localises to the cytoplasm. Functionally, component of the cytosolic iron-sulfur (Fe/S) protein assembly (CIA) machinery. Required for maturation of extramitochondrial Fe-S proteins. The NBP35-CFD1 heterotetramer forms a Fe-S scaffold complex, mediating the de novo assembly of an Fe-S cluster and its transfer to target apoproteins. This Cryptococcus neoformans var. neoformans serotype D (strain B-3501A) (Filobasidiella neoformans) protein is Cytosolic Fe-S cluster assembly factor NBP35.